The chain runs to 178 residues: NAD(P)H-quinone oxidoreductase subunit 6, chloroplastic (178 aa).

Transmembrane regions (helical) follow at residues 10–30 (FILV…VLFT), 32–52 (PIYS…FYIL), 61–81 (AQLL…VMFM), 94–114 (LWTI…FSLI), and 154–174 (FFLP…GAIA).

This sequence belongs to the complex I subunit 6 family. NDH is composed of at least 16 different subunits, 5 of which are encoded in the nucleus.

It is found in the plastid. The protein resides in the chloroplast thylakoid membrane. The enzyme catalyses a plastoquinone + NADH + (n+1) H(+)(in) = a plastoquinol + NAD(+) + n H(+)(out). It catalyses the reaction a plastoquinone + NADPH + (n+1) H(+)(in) = a plastoquinol + NADP(+) + n H(+)(out). Its function is as follows. NDH shuttles electrons from NAD(P)H:plastoquinone, via FMN and iron-sulfur (Fe-S) centers, to quinones in the photosynthetic chain and possibly in a chloroplast respiratory chain. The immediate electron acceptor for the enzyme in this species is believed to be plastoquinone. Couples the redox reaction to proton translocation, and thus conserves the redox energy in a proton gradient. This chain is NAD(P)H-quinone oxidoreductase subunit 6, chloroplastic (ndhG), found in Citrus sinensis (Sweet orange).